A 390-amino-acid chain; its full sequence is MSAAIVNAVKQCGYFNQGQCLSCRHIQQPLAQQVAVKTQTLLQLLAPFIPANSAELFLPPITGDDSGFRNKAKMVVLGAAHEPVLGIVSPSGEAVDLCDCLLYPADMQALLHRLTRFVQQAGLPPYRVDKAKGELKFILLTRSQVRGEYLLRFVLRSHNGIERIERELPALLAEYPQIKVVSVNIQPVHMAILEGDEEIFLTENTRLEERFNHVPLFIRPKSFFQTNPQVAAQLYQTAREWVAEFSPRSLWDLFCGVGGFGLHCASKDITLTGIEIEAEAIACAQMSAQMMGLENVQFMALDSTDFAKGKSAADKPDLIIVNPPRRGIGEALCQSLSEFAPKAILYSSCNPKTLAKDLEHIQGYHLTKVQLFDLFPHTDHFEVLAMLVKD.

4 residues coordinate [4Fe-4S] cluster: cysteine 12, cysteine 20, cysteine 23, and cysteine 100. Residues glutamine 225, phenylalanine 254, glutamate 275, and asparagine 322 each contribute to the S-adenosyl-L-methionine site. Cysteine 349 functions as the Nucleophile in the catalytic mechanism.

Belongs to the class I-like SAM-binding methyltransferase superfamily. RNA M5U methyltransferase family. RlmC subfamily.

It carries out the reaction uridine(747) in 23S rRNA + S-adenosyl-L-methionine = 5-methyluridine(747) in 23S rRNA + S-adenosyl-L-homocysteine + H(+). In terms of biological role, catalyzes the formation of 5-methyl-uridine at position 747 (m5U747) in 23S rRNA. The sequence is that of 23S rRNA (uracil(747)-C(5))-methyltransferase RlmC from Shewanella baltica (strain OS223).